Here is a 186-residue protein sequence, read N- to C-terminus: Oligoribonuclease (186 aa).

The Exonuclease domain maps to 8–171 (LIWIDLEMTG…DDIRESIAEL (164 aa)). The active site involves tyrosine 129.

Belongs to the oligoribonuclease family.

It is found in the cytoplasm. Its function is as follows. 3'-to-5' exoribonuclease specific for small oligoribonucleotides. This chain is Oligoribonuclease, found in Mannheimia succiniciproducens (strain KCTC 0769BP / MBEL55E).